We begin with the raw amino-acid sequence, 316 residues long: Cuticle collagen 13 (316 aa).

An N-terminal signal peptide occupies residues 1–36 (MSEDLKQIAQETESLRKVAFFGIAVSTIATLTAIIA). Composition is skewed to low complexity over residues 127-157 (SGAA…PGQD) and 183-204 (APGQ…GAAL). Residues 127–316 (SGAAGPAGSP…CPPPRTAPGY (190 aa)) form a disordered region. Triple-helical region stretches follow at residues 128 to 157 (GAAG…PGQD), 176 to 202 (GPPG…SGGA), 206 to 235 (GPPG…PGQV), 240 to 266 (GTPG…AGSS), and 269 to 304 (GGPG…EGAC). Residues 205–217 (PGPPGPAGPPGPA) show a composition bias toward pro residues. Low complexity predominate over residues 219-234 (QPGSNGNAGAPGAPGQ). Positions 241–251 (TPGPAGPPGSP) are enriched in pro residues. Low complexity-rich tracts occupy residues 256–266 (APGQPGQAGSS) and 276–295 (DAGA…PGQD). Over residues 307 to 316 (CPPPRTAPGY) the composition is skewed to pro residues.

It belongs to the cuticular collagen family. As to quaternary structure, collagen polypeptide chains are complexed within the cuticle by disulfide bonds and other types of covalent cross-links.

In terms of biological role, nematode cuticles are composed largely of collagen-like proteins. The cuticle functions both as an exoskeleton and as a barrier to protect the worm from its environment. The polypeptide is Cuticle collagen 13 (col-13) (Caenorhabditis elegans).